Consider the following 343-residue polypeptide: MAAEEEDEVEWVVESIAGFLRGPDWSIPILDFVEQKCEVFDDEEESKLTYTEIHQEYKELVEKLLESYLKEIGINEDQFQEACTSPLAKTRTSQAILQPVLAAEDFTIFKAMMVQKNIEMQLQAIRIIQERNGVLPDCLTDGADVVSDLEQEEMKILREVLRKSKEEYDQEEERKRKKQSSEGKMEEPPIYTSETAKLTNSQGDGEHFVQPSSEVKVHFTNQSVQPLARKMELLPETSSLTQKGLKIPGLEHASMEGPIANLSALGTEELRQREHYLKQKRDKLMSMRKDMRAKQIQNTEQKGKPTREAEEMTEKPEMTAEEKQTLLKRRLLAEKLKEEVINK.

Ser85 and Ser147 each carry phosphoserine. Residues 147–181 (SDLEQEEMKILREVLRKSKEEYDQEEERKRKKQSS) adopt a coiled-coil conformation. Positions 165-191 (KEEYDQEEERKRKKQSSEGKMEEPPIY) are disordered. Ser201 is subject to Phosphoserine. The tract at residues 286 to 323 (SMRKDMRAKQIQNTEQKGKPTREAEEMTEKPEMTAEEK) is disordered. The segment covering 301 to 323 (QKGKPTREAEEMTEKPEMTAEEK) has biased composition (basic and acidic residues).

The protein belongs to the CFAP36 family. As to quaternary structure, interacts with ARL3. Widely expressed (at protein level).

Its subcellular location is the nucleus. It is found in the cytoplasm. It localises to the cell projection. The protein resides in the cilium. The protein localises to the flagellum. May act as an effector for ARL3. The chain is Cilia- and flagella-associated protein 36 from Rattus norvegicus (Rat).